The sequence spans 273 residues: Putative pyruvate, phosphate dikinase regulatory protein (273 aa).

Position 149–156 (149–156 (GPSRTSKT)) interacts with ADP.

Belongs to the pyruvate, phosphate/water dikinase regulatory protein family. PDRP subfamily.

It carries out the reaction N(tele)-phospho-L-histidyl/L-threonyl-[pyruvate, phosphate dikinase] + ADP = N(tele)-phospho-L-histidyl/O-phospho-L-threonyl-[pyruvate, phosphate dikinase] + AMP + H(+). The enzyme catalyses N(tele)-phospho-L-histidyl/O-phospho-L-threonyl-[pyruvate, phosphate dikinase] + phosphate + H(+) = N(tele)-phospho-L-histidyl/L-threonyl-[pyruvate, phosphate dikinase] + diphosphate. In terms of biological role, bifunctional serine/threonine kinase and phosphorylase involved in the regulation of the pyruvate, phosphate dikinase (PPDK) by catalyzing its phosphorylation/dephosphorylation. The chain is Putative pyruvate, phosphate dikinase regulatory protein from Rickettsia bellii (strain OSU 85-389).